A 357-amino-acid polypeptide reads, in one-letter code: Cobalt-precorrin-5B C(1)-methyltransferase (357 aa).

Belongs to the CbiD family.

The catalysed reaction is Co-precorrin-5B + S-adenosyl-L-methionine = Co-precorrin-6A + S-adenosyl-L-homocysteine. It participates in cofactor biosynthesis; adenosylcobalamin biosynthesis; cob(II)yrinate a,c-diamide from sirohydrochlorin (anaerobic route): step 6/10. In terms of biological role, catalyzes the methylation of C-1 in cobalt-precorrin-5B to form cobalt-precorrin-6A. This chain is Cobalt-precorrin-5B C(1)-methyltransferase, found in Paramagnetospirillum magneticum (strain ATCC 700264 / AMB-1) (Magnetospirillum magneticum).